Consider the following 890-residue polypeptide: MSDTVRVYEIAEEAGASSQDVIAKAKDLGIELKSPQTAVSYEDAEEITKYMMTGKSERLATKPAKVKKVVKKEEVKKETEEIETPKEKIETVQKVEKEIIKKPELKKVEISKPISKAPQKSEEESENLENPNKIVPKRKGLVIIKKKRPKEEELEEQQTITENQSKKQMKSLSEILGGVDDEEKSYNEPKNKENDDIKKQKVKKEKKKPLIKTQDHGKKLDVDREYSDEFASSDDSLLGEEIVLLDMDLSDSYKIFDEPKPQNIVNQSRSSKPAAFGNVPQGLKRGKRKKRIVRTQEKAEITSVTIPEDIRVYEFAEACGKSPAEVITVLFSLGMMVTKNDFLKQDELEILGEEFGIEVTVKDALEDVNYVETYNDEEDIDTSSFVTRPPVVTIMGHVDHGKTSLLDKIRSSKVAAGEAGGITQHITSYTVTKNGQEITFVDTPGHAAFSAMRARGANVTDIIIIVVAADDGVKMQTEEVISHAKASGCPIIVAMNKMDKETANPDMVKAQMAEKGLTPIDWGGDIEFIGVSARTGDGIEDLLENILLQAEILELKADPTAKAKATVIEASLEKGRGPVANVIVQNGTLKIGDNIVCDTTFGRVKAITDDNGKPVKELGLSQTGTVLGLNEVPTTGSVLVAMDTEKEVREIATTRAEHARAKELSKSTKVSLEEMSGLIAEGKIKQLPVIIKADVGGSLEAIKGSLEKIANDEVKVKVVHAAVGGITESDLVLAGASGECIILGFNVRPTGSVKAKAKADGVTINTYSIIYDLIDDVKHALSGMMSAVIREENTGQAEVRDTFVVPKVGTVAGCLVTDGKVIRGGHARIIRDGVVTYTGKISSLKRFKDDVKEVANGYECGIMFDKFNDIKVGDFIETFIQIEEKVSVDD.

Residues 110-216 (ISKPISKAPQ…KKPLIKTQDH (107 aa)) are disordered. Residues 135 to 148 (VPKRKGLVIIKKKR) show a composition bias toward basic residues. Positions 184 to 199 (KSYNEPKNKENDDIKK) are enriched in basic and acidic residues. The span at 200-210 (QKVKKEKKKPL) shows a compositional bias: basic residues. A tr-type G domain is found at 387-554 (TRPPVVTIMG…NILLQAEILE (168 aa)). Positions 396–403 (GHVDHGKT) are G1. Position 396 to 403 (396 to 403 (GHVDHGKT)) interacts with GTP. Positions 421-425 (GITQH) are G2. The tract at residues 442–445 (DTPG) is G3. Residues 442-446 (DTPGH) and 496-499 (NKMD) each bind GTP. The G4 stretch occupies residues 496–499 (NKMD). The G5 stretch occupies residues 532 to 534 (SAR).

Belongs to the TRAFAC class translation factor GTPase superfamily. Classic translation factor GTPase family. IF-2 subfamily.

Its subcellular location is the cytoplasm. One of the essential components for the initiation of protein synthesis. Protects formylmethionyl-tRNA from spontaneous hydrolysis and promotes its binding to the 30S ribosomal subunits. Also involved in the hydrolysis of GTP during the formation of the 70S ribosomal complex. The sequence is that of Translation initiation factor IF-2 from Aliarcobacter butzleri (strain RM4018) (Arcobacter butzleri).